The following is a 702-amino-acid chain: MKKRNKGLVEQTTTEKNNFSRKTAWKVFWWVIILAVVIGVLAYIFSPRAATAVVESWKLNGGSNSTLTAKVSGFSNELTFKQINGSTYVTDTILQVSITFDGLNSPLTVTAHKTVNSNGNVIFNIANLSINQSNGQITVNSNGTMMNGGSSNNTKSIAGFETLGTFIAPDTRARDVLNGLFGLLPIIIFVVFFLLFWRSARGISAGGREEDNIFSIGKTQAKLAKSTVKFTNIAGLQEEKHELLEIVDYLKNPLKYAQMGARSPRGVILYGPPGTGKTLLAKAVAGEAGVPFFQSTGSGFEDMLVGVGAKRVRDLFNKAKKAAPCIIFIDEIDSVGSKRGRVELSSYSVVEQTLNQLLAEMDGFTSRTGVVVMAATNRLDVLDDALLRPGRFDRHIQINLPDIKEREGILKVHAENKNLSSKISLLDVAKRTPGFSGAQLENVINEATLLAVRDNRTTININDIDEAIDRVIAGPAKKSRVISDEDRKLVAYHEAGHALVGLHVHSNDEVQKITIIPRGQAGGYTLSTPKSGDLNLKRKSDLLAMIATAMGGRAAEEEIYGNLEITTGASSDFYKATNIARAMVTQLGMSKLGQVQYVPSQGTLPSNVKLYSEQTAKDIDNEINFIIEEQYKKAKTIIKSNRKELELLVEALLIAETILKSDIDFIHKNTKLPPEILLQKQEQQAKQKLNKSEVKPESETNS.

At 1–26 the chain is on the cytoplasmic side; that stretch reads MKKRNKGLVEQTTTEKNNFSRKTAWK. A helical transmembrane segment spans residues 27-47; sequence VFWWVIILAVVIGVLAYIFSP. Over 48–175 the chain is Extracellular; it reads RAATAVVESW…FIAPDTRARD (128 aa). A helical transmembrane segment spans residues 176–196; it reads VLNGLFGLLPIIIFVVFFLLF. Topologically, residues 197-702 are cytoplasmic; that stretch reads WRSARGISAG…EVKPESETNS (506 aa). Residue 271 to 278 participates in ATP binding; that stretch reads GPPGTGKT. His493 provides a ligand contact to Zn(2+). Glu494 is an active-site residue. Zn(2+)-binding residues include His497 and Asp572. The interval 682–702 is disordered; it reads EQQAKQKLNKSEVKPESETNS. Over residues 690-702 the composition is skewed to basic and acidic residues; that stretch reads NKSEVKPESETNS.

The protein in the central section; belongs to the AAA ATPase family. It in the C-terminal section; belongs to the peptidase M41 family. In terms of assembly, homohexamer. Requires Zn(2+) as cofactor.

It is found in the cell membrane. Acts as a processive, ATP-dependent zinc metallopeptidase for both cytoplasmic and membrane proteins. Plays a role in the quality control of integral membrane proteins. The polypeptide is ATP-dependent zinc metalloprotease FtsH (Mycoplasma genitalium (strain ATCC 33530 / DSM 19775 / NCTC 10195 / G37) (Mycoplasmoides genitalium)).